The sequence spans 174 residues: uncharacterized protein (174 aa).

The segment at 137-174 (TNVTLGDDTPKSYDAPVSAIPPPATATTANATGVKPLE) is disordered.

This is an uncharacterized protein from Acanthamoeba polyphaga (Amoeba).